The sequence spans 237 residues: MFVFILLSLAAVLQQSFGNVDFNSESPRIKAKQREIVDKHNAFRRSVRPTASNMLRMEWYSEAASNAERWAYRCILDHSPKTSRILNGIKCGENIYMSSIPMTWIDIIKLWHDEYKNFIYGVGANPPGSVIGHYTQIVWYKSYRVGCAASYCPSSSYNYFYVCQYCPAGNFAGLTATPYKSGPTCGDCPSACDNGLCTNPCSREDVFMNCKSLVAQSNCQDDYIRKNCPATCFCPNK.

An N-terminal signal peptide occupies residues 1–18 (MFVFILLSLAAVLQQSFG). An SCP domain is found at 37-165 (VDKHNAFRRS…SYNYFYVCQY (129 aa)). 7 disulfide bridges follow: Cys74-Cys152, Cys91-Cys166, Cys147-Cys163, Cys185-Cys192, Cys188-Cys197, Cys201-Cys234, and Cys219-Cys232. The region spanning 201–234 (CSREDVFMNCKSLVAQSNCQDDYIRKNCPATCFC) is the ShKT domain.

It belongs to the CRISP family. In terms of tissue distribution, expressed by the venom gland.

Its subcellular location is the secreted. Weakly blocks contraction of smooth muscle elicited by high potassium-induced depolarization, but does not block caffeine-stimulated contraction. May target voltage-gated calcium channels on smooth muscle. The sequence is that of Cysteine-rich venom protein DIS2 from Dispholidus typus (Boomslang).